A 165-amino-acid polypeptide reads, in one-letter code: Methylated-DNA--protein-cysteine methyltransferase (165 aa).

The active-site Nucleophile; methyl group acceptor is Cys126.

Belongs to the MGMT family.

The protein resides in the cytoplasm. The enzyme catalyses a 6-O-methyl-2'-deoxyguanosine in DNA + L-cysteinyl-[protein] = S-methyl-L-cysteinyl-[protein] + a 2'-deoxyguanosine in DNA. It carries out the reaction a 4-O-methyl-thymidine in DNA + L-cysteinyl-[protein] = a thymidine in DNA + S-methyl-L-cysteinyl-[protein]. Involved in the cellular defense against the biological effects of O6-methylguanine (O6-MeG) and O4-methylthymine (O4-MeT) in DNA. Repairs the methylated nucleobase in DNA by stoichiometrically transferring the methyl group to a cysteine residue in the enzyme. This is a suicide reaction: the enzyme is irreversibly inactivated. In Mycobacterium leprae (strain TN), this protein is Methylated-DNA--protein-cysteine methyltransferase.